The sequence spans 146 residues: D-aminoacyl-tRNA deacylase (146 aa).

A Gly-cisPro motif, important for rejection of L-amino acids motif is present at residues 137–138 (GP).

The protein belongs to the DTD family. Homodimer.

It is found in the cytoplasm. The catalysed reaction is glycyl-tRNA(Ala) + H2O = tRNA(Ala) + glycine + H(+). The enzyme catalyses a D-aminoacyl-tRNA + H2O = a tRNA + a D-alpha-amino acid + H(+). In terms of biological role, an aminoacyl-tRNA editing enzyme that deacylates mischarged D-aminoacyl-tRNAs. Also deacylates mischarged glycyl-tRNA(Ala), protecting cells against glycine mischarging by AlaRS. Acts via tRNA-based rather than protein-based catalysis; rejects L-amino acids rather than detecting D-amino acids in the active site. By recycling D-aminoacyl-tRNA to D-amino acids and free tRNA molecules, this enzyme counteracts the toxicity associated with the formation of D-aminoacyl-tRNA entities in vivo and helps enforce protein L-homochirality. The protein is D-aminoacyl-tRNA deacylase of Bacillus cereus (strain Q1).